Here is a 1709-residue protein sequence, read N- to C-terminus: Intraflagellar transport protein 122 (1709 aa).

2 WD repeats span residues 51–89 (TQHPLVTCLAISPDGHMVVSMGTDGAVMFNDSTGAALFK) and 132–171 (SFKGTPRAIAWAPGSDWFVISTQDGDLVIMTPEGMELNSC). Residues 209-229 (TIPQTVTPSASASGRSGSGKR) are disordered. The WD 3 repeat unit spans residues 634-673 (LHRSPIVSLDISPDRKYISVVDRSDVVSVYKFLDDSEIVL). One copy of the LRR 1 repeat lies at 1231–1256 (IEALERLRLSGNTSKEAIIIKQLIDA). Positions 1378 to 1404 (LSGEDTVKASSQRSKKDNPPSLRSTIG) are disordered. An LRR 2 repeat occupies 1414–1436 (LGSLAHIDLGINNMNIPPGISEL).

The protein resides in the cell projection. Its subcellular location is the cilium. It is found in the flagellum. It localises to the cytoplasm. The protein localises to the cytoskeleton. The protein resides in the flagellum axoneme. Its subcellular location is the flagellum basal body. Its function is as follows. Component of the intraflagellar transport complex A (IFT-A) involved in flagellar assembly. The sequence is that of Intraflagellar transport protein 122 from Giardia intestinalis (strain ATCC 50803 / WB clone C6) (Giardia lamblia).